A 150-amino-acid polypeptide reads, in one-letter code: Large ribosomal subunit protein bL9 (150 aa).

The protein belongs to the bacterial ribosomal protein bL9 family.

Functionally, binds to the 23S rRNA. In Erwinia tasmaniensis (strain DSM 17950 / CFBP 7177 / CIP 109463 / NCPPB 4357 / Et1/99), this protein is Large ribosomal subunit protein bL9.